The sequence spans 169 residues: Ribosomal RNA large subunit methyltransferase H (169 aa).

Residues L85, G117, and 136 to 141 contribute to the S-adenosyl-L-methionine site; that span reads LGELTW.

It belongs to the RNA methyltransferase RlmH family. In terms of assembly, homodimer.

The protein resides in the cytoplasm. It carries out the reaction pseudouridine(1915) in 23S rRNA + S-adenosyl-L-methionine = N(3)-methylpseudouridine(1915) in 23S rRNA + S-adenosyl-L-homocysteine + H(+). In terms of biological role, specifically methylates the pseudouridine at position 1915 (m3Psi1915) in 23S rRNA. The chain is Ribosomal RNA large subunit methyltransferase H from Brucella ovis (strain ATCC 25840 / 63/290 / NCTC 10512).